Reading from the N-terminus, the 231-residue chain is ATP phosphoribosyltransferase (231 aa).

Belongs to the ATP phosphoribosyltransferase family. Short subfamily. As to quaternary structure, heteromultimer composed of HisG and HisZ subunits.

The protein localises to the cytoplasm. The enzyme catalyses 1-(5-phospho-beta-D-ribosyl)-ATP + diphosphate = 5-phospho-alpha-D-ribose 1-diphosphate + ATP. The protein operates within amino-acid biosynthesis; L-histidine biosynthesis; L-histidine from 5-phospho-alpha-D-ribose 1-diphosphate: step 1/9. In terms of biological role, catalyzes the condensation of ATP and 5-phosphoribose 1-diphosphate to form N'-(5'-phosphoribosyl)-ATP (PR-ATP). Has a crucial role in the pathway because the rate of histidine biosynthesis seems to be controlled primarily by regulation of HisG enzymatic activity. This chain is ATP phosphoribosyltransferase, found in Brucella suis biovar 1 (strain 1330).